The following is a 567-amino-acid chain: MTEPTSRPDIKPRSRDVTDGLEKAAARGMLRAVGMGDEDFAKPQIGVGSSWNEITPCNLSLDRLAKAVKNGVHAAGGYPLEFGTISVSDGISMGHEGMHFSLVSREVIADSVETVMMAERLDGSVLLAGCDKSLPGMMMAAARLDLASVFLYAGSTMPGQVDGNDVTIIDAFEAVGACLAGKISRDEVDRIERAICPGEGACGGMYTANTMASIAEAIGMSLPGSAAPPAVDRRRDGFAHRSGEAVVNLLRQGITARQIMTRAAFENAITVAMALGGSTNAVLHLLAMAREADVDLTIDDFNRIGDKVPHLGDLKPFGKYVMNDVDKIGGIPVVMKALLDAGLMHGDALTVTGKTLAENLAELAPPELDDEVIRKLDRPIHKTGGLTILKGSLAPEGAVVKTAGFDDSVFTGTARVFDGERAAMDALEAGQIQPRDVVVIRYEGPKGGPGMREMLAITGAIKGAGLGKDVLLITDGRFSGGTTGLCVGHIAPEAVDGGPIAFVRDGDQITLDVANRLLEVEVVGPDAEAEWERRKVGWEPNPPKYTRGVLGKYAKIVQSAAHGAITG.

C57 provides a ligand contact to [2Fe-2S] cluster. Position 89 (D89) interacts with Mg(2+). C130 contacts [2Fe-2S] cluster. Mg(2+) contacts are provided by D131 and K132. Position 132 is an N6-carboxylysine (K132). A [2Fe-2S] cluster-binding site is contributed by C202. Position 453 (E453) interacts with Mg(2+). S479 (proton acceptor) is an active-site residue.

It belongs to the IlvD/Edd family. In terms of assembly, homodimer. The cofactor is [2Fe-2S] cluster. Mg(2+) is required as a cofactor.

The enzyme catalyses (2R)-2,3-dihydroxy-3-methylbutanoate = 3-methyl-2-oxobutanoate + H2O. It catalyses the reaction (2R,3R)-2,3-dihydroxy-3-methylpentanoate = (S)-3-methyl-2-oxopentanoate + H2O. It participates in amino-acid biosynthesis; L-isoleucine biosynthesis; L-isoleucine from 2-oxobutanoate: step 3/4. Its pathway is amino-acid biosynthesis; L-valine biosynthesis; L-valine from pyruvate: step 3/4. Its function is as follows. Functions in the biosynthesis of branched-chain amino acids. Catalyzes the dehydration of (2R,3R)-2,3-dihydroxy-3-methylpentanoate (2,3-dihydroxy-3-methylvalerate) into 2-oxo-3-methylpentanoate (2-oxo-3-methylvalerate) and of (2R)-2,3-dihydroxy-3-methylbutanoate (2,3-dihydroxyisovalerate) into 2-oxo-3-methylbutanoate (2-oxoisovalerate), the penultimate precursor to L-isoleucine and L-valine, respectively. The sequence is that of Dihydroxy-acid dehydratase from Nocardioides sp. (strain ATCC BAA-499 / JS614).